The chain runs to 352 residues: MKQQTETEKKVVLLGMSLEELTTVALRMGMPRFAGKQLAEWIYVRRATDFAEMTNISQANRQKLAEIYDLGRYPWSDVQCSVDGTKKYLFPVGEGRFVESVLIPEGDRATLCISSQVGCKMDCLFCMTGKQGWNGNLSAAEILNQIFSVDEAAELTNLVYMGMGEPLDNTDEVLRSIEALTEPWGMGWSPKRITVSTIGAKGLERFLAESRCHLAVSLHSPFPEERRKLMPGEKAFPIMQTLDRIRAYDFSGQRRVSFEYIVFDGLNDDMRHADELAAILRGIPCRINLIRFHKIPAVSLRSSDTARMEAFRKRMESHGYTCTIRASRGEDIFAACGMLSTSKAESSEEKSS.

E99 serves as the catalytic Proton acceptor. Residues 105–325 (EGDRATLCIS…ESHGYTCTIR (221 aa)) form the Radical SAM core domain. C112 and C336 are oxidised to a cystine. C119, C123, and C126 together coordinate [4Fe-4S] cluster. S-adenosyl-L-methionine is bound by residues 164–165 (GE), S196, 217–219 (SLH), and H293. Residue C336 is the S-methylcysteine intermediate of the active site.

Belongs to the radical SAM superfamily. RlmN family. [4Fe-4S] cluster serves as cofactor.

The protein resides in the cytoplasm. It carries out the reaction adenosine(2503) in 23S rRNA + 2 reduced [2Fe-2S]-[ferredoxin] + 2 S-adenosyl-L-methionine = 2-methyladenosine(2503) in 23S rRNA + 5'-deoxyadenosine + L-methionine + 2 oxidized [2Fe-2S]-[ferredoxin] + S-adenosyl-L-homocysteine. It catalyses the reaction adenosine(37) in tRNA + 2 reduced [2Fe-2S]-[ferredoxin] + 2 S-adenosyl-L-methionine = 2-methyladenosine(37) in tRNA + 5'-deoxyadenosine + L-methionine + 2 oxidized [2Fe-2S]-[ferredoxin] + S-adenosyl-L-homocysteine. Functionally, specifically methylates position 2 of adenine 2503 in 23S rRNA and position 2 of adenine 37 in tRNAs. This Porphyromonas gingivalis (strain ATCC 33277 / DSM 20709 / CIP 103683 / JCM 12257 / NCTC 11834 / 2561) protein is Probable dual-specificity RNA methyltransferase RlmN.